The chain runs to 317 residues: Ribose-phosphate pyrophosphokinase A (317 aa).

The Mg(2+) site is built by aspartate 130, histidine 132, and aspartate 145. A binding of phosphoribosylpyrophosphate region spans residues lysine 212–glycine 227.

The protein belongs to the ribose-phosphate pyrophosphokinase family. The cofactor is Mg(2+).

The catalysed reaction is D-ribose 5-phosphate + ATP = 5-phospho-alpha-D-ribose 1-diphosphate + AMP + H(+). Its pathway is metabolic intermediate biosynthesis; 5-phospho-alpha-D-ribose 1-diphosphate biosynthesis; 5-phospho-alpha-D-ribose 1-diphosphate from D-ribose 5-phosphate (route I): step 1/1. This is Ribose-phosphate pyrophosphokinase A (prsA) from Dictyostelium discoideum (Social amoeba).